The following is a 246-amino-acid chain: Acetoacetate decarboxylase (246 aa).

Lysine 116 serves as the catalytic Schiff-base intermediate with acetoacetate.

This sequence belongs to the ADC family.

It carries out the reaction acetoacetate + H(+) = acetone + CO2. Its function is as follows. Catalyzes the conversion of acetoacetate to acetone and carbon dioxide. This chain is Acetoacetate decarboxylase, found in Clostridium botulinum (strain Eklund 17B / Type B).